A 112-amino-acid polypeptide reads, in one-letter code: Hydrogenase maturation factor HypA (112 aa).

Residue H2 participates in Ni(2+) binding. Zn(2+)-binding residues include C72, C75, C88, and C91.

It belongs to the HypA/HybF family.

Functionally, involved in the maturation of [NiFe] hydrogenases. Required for nickel insertion into the metal center of the hydrogenase. The sequence is that of Hydrogenase maturation factor HypA from Francisella philomiragia subsp. philomiragia (strain ATCC 25017 / CCUG 19701 / FSC 153 / O#319-036).